Here is a 341-residue protein sequence, read N- to C-terminus: Protein RecA, plasmid (341 aa).

Position 80-87 (80-87) interacts with ATP; sequence GAESSGKT.

The protein belongs to the RecA family.

It localises to the cytoplasm. Its function is as follows. Can catalyze the hydrolysis of ATP in the presence of single-stranded DNA, the ATP-dependent uptake of single-stranded DNA by duplex DNA, and the ATP-dependent hybridization of homologous single-stranded DNAs. It interacts with LexA causing its activation and leading to its autocatalytic cleavage. In Lactococcus lactis subsp. lactis (Streptococcus lactis), this protein is Protein RecA, plasmid.